The chain runs to 251 residues: Triosephosphate isomerase (251 aa).

9–11 is a binding site for substrate; the sequence is NWK. His-94 functions as the Electrophile in the catalytic mechanism. The active-site Proton acceptor is the Glu-167. Substrate-binding positions include Gly-173, Ser-213, and 234–235; that span reads GG.

The protein belongs to the triosephosphate isomerase family. In terms of assembly, homodimer.

The protein localises to the cytoplasm. It catalyses the reaction D-glyceraldehyde 3-phosphate = dihydroxyacetone phosphate. It participates in carbohydrate biosynthesis; gluconeogenesis. The protein operates within carbohydrate degradation; glycolysis; D-glyceraldehyde 3-phosphate from glycerone phosphate: step 1/1. Involved in the gluconeogenesis. Catalyzes stereospecifically the conversion of dihydroxyacetone phosphate (DHAP) to D-glyceraldehyde-3-phosphate (G3P). This chain is Triosephosphate isomerase, found in Finegoldia magna (strain ATCC 29328 / DSM 20472 / WAL 2508) (Peptostreptococcus magnus).